Here is a 277-residue protein sequence, read N- to C-terminus: Trypsin-2 (277 aa).

The signal sequence occupies residues 1 to 19 (MSNKIAILLLAVVVAVVAC). Residues 20 to 50 (AQAQPSRRHHLVHPLLPRFLPRLHRDSNGHR) constitute a propeptide, activation peptide. The region spanning 51–276 (VVGGFQIDVS…VRDWVRENSG (226 aa)) is the Peptidase S1 domain. Cysteines 76 and 92 form a disulfide. Catalysis depends on charge relay system residues His91 and Asp136. 2 cysteine pairs are disulfide-bonded: Cys201/Cys217 and Cys228/Cys252. Ser232 (charge relay system) is an active-site residue.

Belongs to the peptidase S1 family. In terms of tissue distribution, midgut.

The protein resides in the secreted. The enzyme catalyses Preferential cleavage: Arg-|-Xaa, Lys-|-Xaa.. Major function may be to aid in digestion of the blood meal. The chain is Trypsin-2 (TRYP2) from Anopheles gambiae (African malaria mosquito).